Here is a 362-residue protein sequence, read N- to C-terminus: Phosphoserine aminotransferase (362 aa).

Arg-42 contacts L-glutamate. Pyridoxal 5'-phosphate-binding positions include 76-77, Trp-102, Thr-153, Asp-174, and Gln-197; that span reads AR. Lys-198 is modified (N6-(pyridoxal phosphate)lysine). 239–240 contributes to the pyridoxal 5'-phosphate binding site; sequence NT.

It belongs to the class-V pyridoxal-phosphate-dependent aminotransferase family. SerC subfamily. Homodimer. Requires pyridoxal 5'-phosphate as cofactor.

Its subcellular location is the cytoplasm. The enzyme catalyses O-phospho-L-serine + 2-oxoglutarate = 3-phosphooxypyruvate + L-glutamate. It carries out the reaction 4-(phosphooxy)-L-threonine + 2-oxoglutarate = (R)-3-hydroxy-2-oxo-4-phosphooxybutanoate + L-glutamate. The protein operates within amino-acid biosynthesis; L-serine biosynthesis; L-serine from 3-phospho-D-glycerate: step 2/3. It participates in cofactor biosynthesis; pyridoxine 5'-phosphate biosynthesis; pyridoxine 5'-phosphate from D-erythrose 4-phosphate: step 3/5. Catalyzes the reversible conversion of 3-phosphohydroxypyruvate to phosphoserine and of 3-hydroxy-2-oxo-4-phosphonooxybutanoate to phosphohydroxythreonine. This Xenorhabdus nematophila (strain ATCC 19061 / DSM 3370 / CCUG 14189 / LMG 1036 / NCIMB 9965 / AN6) protein is Phosphoserine aminotransferase.